Reading from the N-terminus, the 185-residue chain is Elongation factor P (185 aa).

It belongs to the elongation factor P family.

It is found in the cytoplasm. It participates in protein biosynthesis; polypeptide chain elongation. Involved in peptide bond synthesis. Stimulates efficient translation and peptide-bond synthesis on native or reconstituted 70S ribosomes in vitro. Probably functions indirectly by altering the affinity of the ribosome for aminoacyl-tRNA, thus increasing their reactivity as acceptors for peptidyl transferase. The protein is Elongation factor P of Geobacillus thermodenitrificans (strain NG80-2).